Reading from the N-terminus, the 236-residue chain is Flagellar L-ring protein (236 aa).

Positions 1 to 16 (MRMRITAILAAGLLAG) are cleaved as a signal peptide. Cysteine 17 is lipidated: N-palmitoyl cysteine. The S-diacylglycerol cysteine moiety is linked to residue cysteine 17. The segment at 96–143 (ENETDRSRKNSSGFNLGASGESQTSDFAWSGDLEYGSNTKTEGDGKTE) is disordered. Polar residues predominate over residues 105–122 (NSSGFNLGASGESQTSDF).

Belongs to the FlgH family. In terms of assembly, the basal body constitutes a major portion of the flagellar organelle and consists of four rings (L,P,S, and M) mounted on a central rod.

The protein localises to the cell outer membrane. It localises to the bacterial flagellum basal body. Its function is as follows. Assembles around the rod to form the L-ring and probably protects the motor/basal body from shearing forces during rotation. This chain is Flagellar L-ring protein, found in Sinorhizobium medicae (strain WSM419) (Ensifer medicae).